Consider the following 178-residue polypeptide: Large ribosomal subunit protein uL10 (178 aa).

The protein belongs to the universal ribosomal protein uL10 family. As to quaternary structure, part of the ribosomal stalk of the 50S ribosomal subunit. The N-terminus interacts with L11 and the large rRNA to form the base of the stalk. The C-terminus forms an elongated spine to which L12 dimers bind in a sequential fashion forming a multimeric L10(L12)X complex.

Forms part of the ribosomal stalk, playing a central role in the interaction of the ribosome with GTP-bound translation factors. The protein is Large ribosomal subunit protein uL10 of Leuconostoc mesenteroides subsp. mesenteroides (strain ATCC 8293 / DSM 20343 / BCRC 11652 / CCM 1803 / JCM 6124 / NCDO 523 / NBRC 100496 / NCIMB 8023 / NCTC 12954 / NRRL B-1118 / 37Y).